A 225-amino-acid chain; its full sequence is Translation initiation factor 6 (225 aa).

This sequence belongs to the eIF-6 family.

Functionally, binds to the 50S ribosomal subunit and prevents its association with the 30S ribosomal subunit to form the 70S initiation complex. This is Translation initiation factor 6 from Hyperthermus butylicus (strain DSM 5456 / JCM 9403 / PLM1-5).